Reading from the N-terminus, the 181-residue chain is Protein OPG161 (181 aa).

The Intravirion segment spans residues 1 to 34; that stretch reads MMTPENDEEQTSVFSATVYGDKIQGKNKRKRVIG. A helical membrane pass occupies residues 35 to 57; that stretch reads LCIRISMVISLLSMITMSAFLIV. The Virion surface portion of the chain corresponds to 58 to 181; it reads RLNQCMSANK…SQEVRKYFCT (124 aa). An N-linked (GlcNAc...) asparagine; by host glycan is attached at Asn135.

This sequence belongs to the orthopoxvirus OPG161 family. As to quaternary structure, homodimer, disulfide-linked. Interacts with protein OPG190. Interacts (via C-terminus) with protein OPG164. Interacts with OPG162.

It localises to the virion membrane. Its subcellular location is the host membrane. Functionally, forms a complex with OPG162 and OPG190 to coordinate the incorporation of OPG164 into wrapped enveloped virion (EV) membranes and, subsequently, the production of actin tails. Therefore plays an essential role in efficient cell-to-cell spread of viral particles. The sequence is that of Protein OPG161 (OPG161) from Monkeypox virus.